The following is a 469-amino-acid chain: Phosphoglucosamine mutase (469 aa).

Catalysis depends on serine 117, which acts as the Phosphoserine intermediate. Residues serine 117, aspartate 263, aspartate 265, and aspartate 267 each coordinate Mg(2+). Serine 117 carries the phosphoserine modification.

This sequence belongs to the phosphohexose mutase family. Requires Mg(2+) as cofactor. In terms of processing, activated by phosphorylation.

The enzyme catalyses alpha-D-glucosamine 1-phosphate = D-glucosamine 6-phosphate. In terms of biological role, catalyzes the conversion of glucosamine-6-phosphate to glucosamine-1-phosphate. This Anaeromyxobacter sp. (strain Fw109-5) protein is Phosphoglucosamine mutase.